A 178-amino-acid chain; its full sequence is Bifunctional protein PyrR (178 aa).

Substrate is bound by residues 41–42 (RR), 103–111 (DDVLYTGRT), and Arg136. Residues 99 to 111 (VILVDDVLYTGRT) carry the PRPP-binding motif.

Belongs to the purine/pyrimidine phosphoribosyltransferase family. PyrR subfamily. In terms of assembly, homodimer and homohexamer; in equilibrium.

The enzyme catalyses UMP + diphosphate = 5-phospho-alpha-D-ribose 1-diphosphate + uracil. In terms of biological role, regulates transcriptional attenuation of the pyrimidine nucleotide (pyr) operon by binding in a uridine-dependent manner to specific sites on pyr mRNA. This disrupts an antiterminator hairpin in the RNA and favors formation of a downstream transcription terminator, leading to a reduced expression of downstream genes. Its function is as follows. Also displays a weak uracil phosphoribosyltransferase activity which is not physiologically significant. The sequence is that of Bifunctional protein PyrR from Clostridium acetobutylicum (strain ATCC 824 / DSM 792 / JCM 1419 / IAM 19013 / LMG 5710 / NBRC 13948 / NRRL B-527 / VKM B-1787 / 2291 / W).